We begin with the raw amino-acid sequence, 54 residues long: Ovomucoid (54 aa).

Residues 4–54 form the Kazal-like domain; that stretch reads VDCSDYPKPVCSLEYMPLCGSDSKTYSNKCDFCNAFVDSNGTLSLSHFGKC. Disulfide bonds link Cys-6-Cys-36, Cys-14-Cys-33, and Cys-22-Cys-54. A glycan (N-linked (GlcNAc...) asparagine) is linked at Asn-43.

It localises to the secreted. The protein is Ovomucoid of Circus aeruginosus (Western marsh harrier).